Reading from the N-terminus, the 387-residue chain is 3-ketoacyl-CoA thiolase (387 aa).

C91 (acyl-thioester intermediate) is an active-site residue. Catalysis depends on proton acceptor residues H343 and C373.

The protein belongs to the thiolase-like superfamily. Thiolase family. As to quaternary structure, heterotetramer of two alpha chains (FadB) and two beta chains (FadA).

The protein localises to the cytoplasm. It catalyses the reaction an acyl-CoA + acetyl-CoA = a 3-oxoacyl-CoA + CoA. It participates in lipid metabolism; fatty acid beta-oxidation. Catalyzes the final step of fatty acid oxidation in which acetyl-CoA is released and the CoA ester of a fatty acid two carbons shorter is formed. This Shewanella loihica (strain ATCC BAA-1088 / PV-4) protein is 3-ketoacyl-CoA thiolase.